The chain runs to 232 residues: Large ribosomal subunit protein uL1 (232 aa).

This sequence belongs to the universal ribosomal protein uL1 family. As to quaternary structure, part of the 50S ribosomal subunit.

In terms of biological role, binds directly to 23S rRNA. The L1 stalk is quite mobile in the ribosome, and is involved in E site tRNA release. Protein L1 is also a translational repressor protein, it controls the translation of the L11 operon by binding to its mRNA. The protein is Large ribosomal subunit protein uL1 of Colwellia psychrerythraea (strain 34H / ATCC BAA-681) (Vibrio psychroerythus).